The primary structure comprises 172 residues: MERAVQGGDAREQANSERWDGGCGGTITPFKLSDESPSLHEWRLHHSEEGEDQDHPLGFKESWSFGKVVFKRYLRYGGTETSLHRALGSWERNTVNNAASRFLGFGQIGCTYSIRFRGSCLTISGGSRTLQRLIEMAIRTKCTVLQLTPSEVEGNVSGGSPEGIEAFEKESE.

Positions 153–172 (EGNVSGGSPEGIEAFEKESE) are disordered.

This sequence belongs to the tombusvirus protein p19 family. As to quaternary structure, homodimer.

Functionally, viral suppressor of RNA silencing which binds specifically to silencing RNAs (siRNAs). Acts as a molecular caliper to specifically select siRNAs based on the length of the duplex region of the RNA. This Pelargonium zonale (PeNSV) protein is RNA silencing suppressor p19.